The sequence spans 522 residues: Protein nucleotidyltransferase YdiU (522 aa).

ATP is bound by residues glycine 109, glycine 111, arginine 112, lysine 132, aspartate 144, glycine 145, arginine 195, and arginine 202. Catalysis depends on aspartate 271, which acts as the Proton acceptor. Asparagine 272 and aspartate 281 together coordinate Mg(2+). Aspartate 281 provides a ligand contact to ATP.

It belongs to the SELO family. Requires Mg(2+) as cofactor. Mn(2+) serves as cofactor.

It carries out the reaction L-seryl-[protein] + ATP = 3-O-(5'-adenylyl)-L-seryl-[protein] + diphosphate. The enzyme catalyses L-threonyl-[protein] + ATP = 3-O-(5'-adenylyl)-L-threonyl-[protein] + diphosphate. The catalysed reaction is L-tyrosyl-[protein] + ATP = O-(5'-adenylyl)-L-tyrosyl-[protein] + diphosphate. It catalyses the reaction L-histidyl-[protein] + UTP = N(tele)-(5'-uridylyl)-L-histidyl-[protein] + diphosphate. It carries out the reaction L-seryl-[protein] + UTP = O-(5'-uridylyl)-L-seryl-[protein] + diphosphate. The enzyme catalyses L-tyrosyl-[protein] + UTP = O-(5'-uridylyl)-L-tyrosyl-[protein] + diphosphate. In terms of biological role, nucleotidyltransferase involved in the post-translational modification of proteins. It can catalyze the addition of adenosine monophosphate (AMP) or uridine monophosphate (UMP) to a protein, resulting in modifications known as AMPylation and UMPylation. This Burkholderia ambifaria (strain MC40-6) protein is Protein nucleotidyltransferase YdiU.